Consider the following 1081-residue polypeptide: Zinc finger protein 827 (1081 aa).

Residues 1 to 10 (MPRRKQEQPK) show a composition bias toward basic and acidic residues. Residues 1-14 (MPRRKQEQPKRLPS) are mediates direct interaction with RBBP4. The disordered stretch occupies residues 1–77 (MPRRKQEQPK…DTSLGSTTPS (77 aa)). An RRK motif; mediates NuRD recruitment to telomeres motif is present at residues 3–5 (RRK). The span at 62–77 (EQSTSPDTSLGSTTPS) shows a compositional bias: polar residues. Glycyl lysine isopeptide (Lys-Gly) (interchain with G-Cter in SUMO2) cross-links involve residues Lys176, Lys216, and Lys226. Disordered regions lie at residues 259-278 (KVSE…ASSF) and 307-348 (SSLL…SLEL). Pro residues predominate over residues 327–344 (VTPPPPPPPPPPPPPPPQ). Glycyl lysine isopeptide (Lys-Gly) (interchain with G-Cter in SUMO2) cross-links involve residues Lys360 and Lys372. 3 consecutive C2H2-type zinc fingers follow at residues 374-396 (FQCP…MVIH), 402-424 (HQCP…MKVH), and 433-455 (FQCQ…MRCH). Residues Lys466, Lys475, Lys523, Lys549, Lys580, Lys587, Lys597, Lys634, Lys639, and Lys658 each participate in a glycyl lysine isopeptide (Lys-Gly) (interchain with G-Cter in SUMO2) cross-link. Residue Lys673 forms a Glycyl lysine isopeptide (Lys-Gly) (interchain with G-Cter in SUMO1); alternate linkage. Lys673 is covalently cross-linked (Glycyl lysine isopeptide (Lys-Gly) (interchain with G-Cter in SUMO2); alternate). Residues Lys704, Lys710, Lys742, Lys778, and Lys798 each participate in a glycyl lysine isopeptide (Lys-Gly) (interchain with G-Cter in SUMO2) cross-link. 2 consecutive C2H2-type zinc fingers follow at residues 817–839 (FPCD…LSLH) and 845–867 (YKCH…LTVH). Glycyl lysine isopeptide (Lys-Gly) (interchain with G-Cter in SUMO2) cross-links involve residues Lys870 and Lys891. C2H2-type zinc fingers lie at residues 897–919 (YSCH…MSLH) and 929–952 (ICCT…GTKH). The segment covering 947–960 (HIGTKHTGEDRKTP) has biased composition (basic and acidic residues). The segment at 947–996 (HIGTKHTGEDRKTPSESNSPSSSSLSALSDSANSKDDSDGSQKNKGGNNL) is disordered. Lys958 participates in a covalent cross-link: Glycyl lysine isopeptide (Lys-Gly) (interchain with G-Cter in SUMO2). The span at 961 to 978 (SESNSPSSSSLSALSDSA) shows a compositional bias: low complexity. Over residues 979–988 (NSKDDSDGSQ) the composition is skewed to basic and acidic residues. Lys1014 participates in a covalent cross-link: Glycyl lysine isopeptide (Lys-Gly) (interchain with G-Cter in SUMO2). 2 consecutive C2H2-type zinc fingers follow at residues 1019 to 1041 (FECV…LQIH) and 1047 to 1069 (FECD…KKCH).

It belongs to the krueppel C2H2-type zinc-finger protein family. As to quaternary structure, part of a transcription inhibitory ribonucleoprotein complex composed at least of the circular RNA circZNF827, HNRNPK and HNRNPL. Interacts with the nucleosome remodeling and histone deacetylase/NuRD complex. Interacts with RBBP4; the interaction is direct and recruits RBBP4, a component of the NuRD complex, to telomeres.

The protein localises to the nucleus. It is found in the chromosome. The protein resides in the telomere. Functionally, as part of a ribonucleoprotein complex composed at least of HNRNPK, HNRNPL and the circular RNA circZNF827 that nucleates the complex on chromatin, may negatively regulate the transcription of genes involved in neuronal differentiation. Could also recruit the nucleosome remodeling and histone deacetylase/NuRD complex to telomeric regions of chromosomes to regulate chromatin remodeling as part of telomere maintenance. The sequence is that of Zinc finger protein 827 (ZNF827) from Homo sapiens (Human).